A 406-amino-acid chain; its full sequence is UPF0754 membrane protein CYB_2931 (406 aa).

Transmembrane regions (helical) follow at residues 1–21 (MAFW…YFTN) and 385–405 (IVNL…LFLL).

Belongs to the UPF0754 family.

The protein localises to the cell inner membrane. The protein is UPF0754 membrane protein CYB_2931 of Synechococcus sp. (strain JA-2-3B'a(2-13)) (Cyanobacteria bacterium Yellowstone B-Prime).